The following is a 153-amino-acid chain: Nucleoside diphosphate kinase (153 aa).

ATP is bound by residues lysine 12, phenylalanine 60, arginine 88, threonine 94, arginine 105, and asparagine 115. Residue histidine 118 is the Pros-phosphohistidine intermediate of the active site.

The protein belongs to the NDK family. Requires Mg(2+) as cofactor.

The protein localises to the cytoplasm. The enzyme catalyses a 2'-deoxyribonucleoside 5'-diphosphate + ATP = a 2'-deoxyribonucleoside 5'-triphosphate + ADP. The catalysed reaction is a ribonucleoside 5'-diphosphate + ATP = a ribonucleoside 5'-triphosphate + ADP. In terms of biological role, major role in the synthesis of nucleoside triphosphates other than ATP. The ATP gamma phosphate is transferred to the NDP beta phosphate via a ping-pong mechanism, using a phosphorylated active-site intermediate. The protein is Nucleoside diphosphate kinase of Natronomonas pharaonis (strain ATCC 35678 / DSM 2160 / CIP 103997 / JCM 8858 / NBRC 14720 / NCIMB 2260 / Gabara) (Halobacterium pharaonis).